The chain runs to 253 residues: Imidazole glycerol phosphate synthase subunit HisF (253 aa).

Catalysis depends on residues aspartate 11 and aspartate 130.

It belongs to the HisA/HisF family. As to quaternary structure, heterodimer of HisH and HisF.

It localises to the cytoplasm. It carries out the reaction 5-[(5-phospho-1-deoxy-D-ribulos-1-ylimino)methylamino]-1-(5-phospho-beta-D-ribosyl)imidazole-4-carboxamide + L-glutamine = D-erythro-1-(imidazol-4-yl)glycerol 3-phosphate + 5-amino-1-(5-phospho-beta-D-ribosyl)imidazole-4-carboxamide + L-glutamate + H(+). The protein operates within amino-acid biosynthesis; L-histidine biosynthesis; L-histidine from 5-phospho-alpha-D-ribose 1-diphosphate: step 5/9. In terms of biological role, IGPS catalyzes the conversion of PRFAR and glutamine to IGP, AICAR and glutamate. The HisF subunit catalyzes the cyclization activity that produces IGP and AICAR from PRFAR using the ammonia provided by the HisH subunit. In Gluconobacter oxydans (strain 621H) (Gluconobacter suboxydans), this protein is Imidazole glycerol phosphate synthase subunit HisF.